The chain runs to 232 residues: Ribonuclease 3 (232 aa).

An RNase III domain is found at 5 to 134 (KKALLEQFDL…FLGALLLDKG (130 aa)). Glutamate 47 lines the Mg(2+) pocket. Aspartate 51 is an active-site residue. Mg(2+) contacts are provided by aspartate 120 and glutamate 123. Residue glutamate 123 is part of the active site. The DRBM domain maps to 160–229 (DYKTKLQELL…AKNAFEKESS (70 aa)). Residues 203-232 (KSGQGQGRSKKLAEQEAAKNAFEKESSSCF) form a disordered region. Basic and acidic residues predominate over residues 213–232 (KLAEQEAAKNAFEKESSSCF).

The protein belongs to the ribonuclease III family. In terms of assembly, homodimer. Mg(2+) serves as cofactor.

The protein localises to the cytoplasm. It carries out the reaction Endonucleolytic cleavage to 5'-phosphomonoester.. Its function is as follows. Digests double-stranded RNA. Involved in the processing of primary rRNA transcript to yield the immediate precursors to the large and small rRNAs (23S and 16S). Processes some mRNAs, and tRNAs when they are encoded in the rRNA operon. Processes pre-crRNA and tracrRNA of type II CRISPR loci if present in the organism. The protein is Ribonuclease 3 of Streptococcus sanguinis (strain SK36).